Consider the following 741-residue polypeptide: MEFIYKYAWIVPFLPLSASVPIGLGSLFFPGATKSVRRTWALISIFLLSVAMFLSFNLFLQQITGGPIYRYFWSWVINNKFSLELGYLIDPLTSIMLVLVTTVGTMVMIYSDNYMSHDKTYVRFFAYLNFFNASMLGLVISPNLLQIYIFWELVGMCSYLLIGFWFTRPSAANACQKAFITNRAGDFGLLLGILGFYWVTGSFEFQYLSEKLNELTAIDGVGSFFVTSCAFLLFLGPVAKSAQFPLHVWLPDAMEGPTPISALIHAATMVAAGIFLVARLFPLFKALPLIMYLISWIGGITALLGATMALAQKDLKRGLAYSTMSQLGYMMLALGIDSYRIALFHLITHAYSKALLFLGSGSVIHSMEPIVGYCPRKSQNMALMGGLRKYMPITGITFLLGTLSLSGIPPFACFWSKDQILSDSKLYSPIFGGITWFTAGLTAFYMFRMYLLTFEGDFRVNLVNSYNNHITLYSTSMWGEEESRILNRTRADSMSNQIIGRNNSFSKEAFQISNKMEGLYKKNRGLVVTYPFFYKGSFAYPKESGKAMLFPLVVLGIFTLFVGLIGVPFFRSGMRYDILSQWFASSTAPFDKKHPENWSEFFIDAIPSVGIAFLGILIACILYRPIYFLSQDVYHKTNPHMKIIMDQSINIIYNWSFYQAYIDIYYDIILIKGIRGLAETSHSFDQWAIDGIPNGVGFLGLFVGEGMRCLGGGRISSYIFFSLFCVLISILIYYYSFSFYP.

18 consecutive transmembrane segments (helical) span residues 9 to 29 (WIVPFLPLSASVPIGLGSLFF), 40 to 60 (WALISIFLLSVAMFLSFNLFL), 89 to 109 (IDPLTSIMLVLVTTVGTMVMI), 124 to 144 (FFAYLNFFNASMLGLVISPNL), 147 to 167 (IYIFWELVGMCSYLLIGFWFT), 185 to 205 (GDFGLLLGILGFYWVTGSFEF), 218 to 238 (IDGVGSFFVTSCAFLLFLGPV), 258 to 278 (TPISALIHAATMVAAGIFLVA), 286 to 306 (ALPLIMYLISWIGGITALLGA), 327 to 347 (LGYMMLALGIDSYRIALFHLI), 354 to 374 (ALLFLGSGSVIHSMEPIVGYC), 395 to 415 (GITFLLGTLSLSGIPPFACFW), 427 to 447 (YSPIFGGITWFTAGLTAFYMF), 550 to 570 (FPLVVLGIFTLFVGLIGVPFF), 601 to 621 (FFIDAIPSVGIAFLGILIACI), 651 to 671 (IIYNWSFYQAYIDIYYDIILI), 687 to 707 (WAIDGIPNGVGFLGLFVGEGM), and 719 to 739 (IFFSLFCVLISILIYYYSFSF).

The protein belongs to the complex I subunit 5 family. In terms of assembly, NDH is composed of at least 16 different subunits, 5 of which are encoded in the nucleus.

Its subcellular location is the plastid. The protein resides in the chloroplast thylakoid membrane. It carries out the reaction a plastoquinone + NADH + (n+1) H(+)(in) = a plastoquinol + NAD(+) + n H(+)(out). The enzyme catalyses a plastoquinone + NADPH + (n+1) H(+)(in) = a plastoquinol + NADP(+) + n H(+)(out). Functionally, NDH shuttles electrons from NAD(P)H:plastoquinone, via FMN and iron-sulfur (Fe-S) centers, to quinones in the photosynthetic chain and possibly in a chloroplast respiratory chain. The immediate electron acceptor for the enzyme in this species is believed to be plastoquinone. Couples the redox reaction to proton translocation, and thus conserves the redox energy in a proton gradient. This is NAD(P)H-quinone oxidoreductase subunit 5, chloroplastic (ndhF) from Cryptomeria japonica (Japanese cedar).